The following is a 335-amino-acid chain: Phospho-N-acetylmuramoyl-pentapeptide-transferase (335 aa).

The next 10 membrane-spanning stretches (helical) occupy residues 3-23 (LTLI…PHFI), 53-73 (GGTV…ILFF), 78-98 (SMGL…IGFL), 118-138 (LSLQ…PSGI), 143-163 (VFGF…FWVV), 175-195 (IDGL…VIAI), 200-220 (YDVL…FIFN), 226-246 (VFMG…ISIA), 251-271 (WTLL…MLQV), and 314-334 (VDAF…AILY).

The protein belongs to the glycosyltransferase 4 family. MraY subfamily. Mg(2+) serves as cofactor.

It localises to the cell membrane. It carries out the reaction UDP-N-acetyl-alpha-D-muramoyl-L-alanyl-gamma-D-glutamyl-L-lysyl-D-alanyl-D-alanine + di-trans,octa-cis-undecaprenyl phosphate = Mur2Ac(oyl-L-Ala-gamma-D-Glu-L-Lys-D-Ala-D-Ala)-di-trans,octa-cis-undecaprenyl diphosphate + UMP. It participates in cell wall biogenesis; peptidoglycan biosynthesis. Its function is as follows. Catalyzes the initial step of the lipid cycle reactions in the biosynthesis of the cell wall peptidoglycan: transfers peptidoglycan precursor phospho-MurNAc-pentapeptide from UDP-MurNAc-pentapeptide onto the lipid carrier undecaprenyl phosphate, yielding undecaprenyl-pyrophosphoryl-MurNAc-pentapeptide, known as lipid I. The polypeptide is Phospho-N-acetylmuramoyl-pentapeptide-transferase (Streptococcus uberis (strain ATCC BAA-854 / 0140J)).